Reading from the N-terminus, the 120-residue chain is Ribosome-binding factor A (120 aa).

The protein belongs to the RbfA family. Monomer. Binds 30S ribosomal subunits, but not 50S ribosomal subunits or 70S ribosomes.

It is found in the cytoplasm. Its function is as follows. One of several proteins that assist in the late maturation steps of the functional core of the 30S ribosomal subunit. Associates with free 30S ribosomal subunits (but not with 30S subunits that are part of 70S ribosomes or polysomes). Required for efficient processing of 16S rRNA. May interact with the 5'-terminal helix region of 16S rRNA. This is Ribosome-binding factor A from Fusobacterium nucleatum subsp. nucleatum (strain ATCC 25586 / DSM 15643 / BCRC 10681 / CIP 101130 / JCM 8532 / KCTC 2640 / LMG 13131 / VPI 4355).